The sequence spans 281 residues: Phosphate import ATP-binding protein PstB 1 (281 aa).

The interval 1–34 is disordered; it reads MTENTAETADESSDGGVTATTGAATTTPTTPPEP. Low complexity predominate over residues 15–28; the sequence is GGVTATTGAATTTP. The region spanning 36–276 is the ABC transporter domain; the sequence is IRARDLDVFY…PEHQRVEEYI (241 aa). 68-75 is an ATP binding site; that stretch reads GPSGCGKS.

It belongs to the ABC transporter superfamily. Phosphate importer (TC 3.A.1.7) family. The complex is composed of two ATP-binding proteins (PstB), two transmembrane proteins (PstC and PstA) and a solute-binding protein (PstS).

It localises to the cell membrane. The catalysed reaction is phosphate(out) + ATP + H2O = ADP + 2 phosphate(in) + H(+). Part of the ABC transporter complex PstSACB involved in phosphate import. Responsible for energy coupling to the transport system. The protein is Phosphate import ATP-binding protein PstB 1 of Halobacterium salinarum (strain ATCC 700922 / JCM 11081 / NRC-1) (Halobacterium halobium).